A 471-amino-acid polypeptide reads, in one-letter code: Glutamate--tRNA ligase 2 (471 aa).

The short motif at 15 to 25 (PSPTGYLHIGG) is the 'HIGH' region element. Residues 243–247 (KLSKR) carry the 'KMSKS' region motif. An ATP-binding site is contributed by K246.

Belongs to the class-I aminoacyl-tRNA synthetase family. Glutamate--tRNA ligase type 1 subfamily. As to quaternary structure, monomer.

It localises to the cytoplasm. It carries out the reaction tRNA(Glu) + L-glutamate + ATP = L-glutamyl-tRNA(Glu) + AMP + diphosphate. In terms of biological role, catalyzes the attachment of glutamate to tRNA(Glu) in a two-step reaction: glutamate is first activated by ATP to form Glu-AMP and then transferred to the acceptor end of tRNA(Glu). The protein is Glutamate--tRNA ligase 2 of Cereibacter sphaeroides (strain ATCC 17025 / ATH 2.4.3) (Rhodobacter sphaeroides).